Here is a 313-residue protein sequence, read N- to C-terminus: Calcium homeostasis modulator protein 6 (313 aa).

Topologically, residues methionine 1–serine 21 are cytoplasmic. The chain crosses the membrane as a helical span at residues leucine 22 to valine 37. Residues valine 38–threonine 46 are Extracellular-facing. 3 disulfide bridges follow: cysteine 41/cysteine 125, cysteine 43/cysteine 154, and cysteine 138/cysteine 145. A helical transmembrane segment spans residues tryptophan 47–tyrosine 68. Topologically, residues alanine 69 to leucine 101 are cytoplasmic. A helical membrane pass occupies residues serine 102 to alanine 126. Topologically, residues valine 127 to glutamine 167 are extracellular. A helical transmembrane segment spans residues leucine 168–valine 190. Residues lysine 191–leucine 313 are Cytoplasmic-facing.

It belongs to the CALHM family. In terms of assembly, oligomerizes to form decameric and undecameric channels. Post-translationally, N-glycosylated. Immune cells in primary and secondary lymphoid organs.

It localises to the cell membrane. The catalysed reaction is ATP(in) = ATP(out). Its activity is regulated as follows. Inhibited by Gd(3+). Partially inhibited by divalent ions Ca(2+) and Ba(2+). Its function is as follows. Pore-forming subunit of an ATP-permeable channel. In response to pathogen-derived and proinflammatory stimuli, relocates from intracellular compartments to NK-dendritic cell and NK-macrophage immune synapses where it mediates ATP efflux and NK cell activation involved in antimicrobial and antitumor responses. May assemble to form gap junction channel-like structures with gating and ion conductance likely regulated by membrane lipids and voltage rather than by extracellular calcium levels. The protein is Calcium homeostasis modulator protein 6 of Mus musculus (Mouse).